The chain runs to 294 residues: Release factor glutamine methyltransferase (294 aa).

Glutamate 148 and asparagine 201 together coordinate S-adenosyl-L-methionine. 201-204 is a substrate binding site; sequence NPPY.

This sequence belongs to the protein N5-glutamine methyltransferase family. PrmC subfamily.

It carries out the reaction L-glutaminyl-[peptide chain release factor] + S-adenosyl-L-methionine = N(5)-methyl-L-glutaminyl-[peptide chain release factor] + S-adenosyl-L-homocysteine + H(+). In terms of biological role, methylates the class 1 translation termination release factors RF1/PrfA and RF2/PrfB on the glutamine residue of the universally conserved GGQ motif. The protein is Release factor glutamine methyltransferase of Bifidobacterium longum (strain NCC 2705).